We begin with the raw amino-acid sequence, 367 residues long: MVQVPIKPTPQTPAPTTAIPNGPALEAWLNDWAQRIINGDRLTRTEALRLTAITGPENILKLCAAADLIRHECCGNTVDLCSIVNVKSGSCSENCSFCSQSAHHPGEDSPVYGLKTAEEIIEQAKAAEAAGAKRFCLVSQGRGIKYNSPRDTEFEQILETVRRIQAETAIKPCCALGEVTPEQAQQLREAGVTRYNHNLEASENFFPDIVTTHSWQDRVETIKNLKAAGIQACSGGIMGLGESWEDRVDLAIALRDLEVESVPLNLLNPRQGTPLGSNDRLDVYEALKCMAIFRFILPEQIIRYAGGREAVMGELQHLGLKAGINAMLIGHYLTTMGQPPEQDQAMLKSLGLQGGEAPIPGQYSAAQ.

Residues Cys73 to Arg308 enclose the Radical SAM core domain. Positions 91, 95, and 98 each coordinate [4Fe-4S] cluster. Cys136, Cys173, Cys233, and Arg303 together coordinate [2Fe-2S] cluster.

This sequence belongs to the radical SAM superfamily. Biotin synthase family. Homodimer. [4Fe-4S] cluster is required as a cofactor. It depends on [2Fe-2S] cluster as a cofactor.

The enzyme catalyses (4R,5S)-dethiobiotin + (sulfur carrier)-SH + 2 reduced [2Fe-2S]-[ferredoxin] + 2 S-adenosyl-L-methionine = (sulfur carrier)-H + biotin + 2 5'-deoxyadenosine + 2 L-methionine + 2 oxidized [2Fe-2S]-[ferredoxin]. It functions in the pathway cofactor biosynthesis; biotin biosynthesis; biotin from 7,8-diaminononanoate: step 2/2. In terms of biological role, catalyzes the conversion of dethiobiotin (DTB) to biotin by the insertion of a sulfur atom into dethiobiotin via a radical-based mechanism. The polypeptide is Biotin synthase (Picosynechococcus sp. (strain ATCC 27264 / PCC 7002 / PR-6) (Agmenellum quadruplicatum)).